The chain runs to 563 residues: Probable ganciclovir kinase (563 aa).

The span at 1-16 (MDNGVETPQGQKTQPI) shows a compositional bias: polar residues. The disordered stretch occupies residues 1–33 (MDNGVETPQGQKTQPINLPPDRKRLRKHDGLGK). ATP is bound by residues 202–210 (LGVGAYGKV) and Lys219. Residue Asp314 is the Proton acceptor of the active site.

This sequence belongs to the protein kinase superfamily. Tyr protein kinase family. HCMV ganciclovir subfamily.

Its function is as follows. Phosphorylates the antiviral nucleoside analog ganciclovir. The sequence is that of Probable ganciclovir kinase (U69) from Human herpesvirus 6B (strain Z29) (HHV-6 variant B).